The following is a 429-amino-acid chain: 3-phosphoshikimate 1-carboxyvinyltransferase (429 aa).

3-phosphoshikimate-binding residues include Lys11, Ser12, and Arg16. Position 11 (Lys11) interacts with phosphoenolpyruvate. Residues Gly82 and Arg110 each coordinate phosphoenolpyruvate. Positions 155, 157, 302, and 329 each coordinate 3-phosphoshikimate. Gln157 is a phosphoenolpyruvate binding site. The active-site Proton acceptor is Asp302. Phosphoenolpyruvate is bound by residues Arg333 and Arg385.

It belongs to the EPSP synthase family. In terms of assembly, monomer.

The protein localises to the cytoplasm. The catalysed reaction is 3-phosphoshikimate + phosphoenolpyruvate = 5-O-(1-carboxyvinyl)-3-phosphoshikimate + phosphate. Its pathway is metabolic intermediate biosynthesis; chorismate biosynthesis; chorismate from D-erythrose 4-phosphate and phosphoenolpyruvate: step 6/7. Catalyzes the transfer of the enolpyruvyl moiety of phosphoenolpyruvate (PEP) to the 5-hydroxyl of shikimate-3-phosphate (S3P) to produce enolpyruvyl shikimate-3-phosphate and inorganic phosphate. This Helicobacter pylori (strain P12) protein is 3-phosphoshikimate 1-carboxyvinyltransferase.